The following is a 250-amino-acid chain: uncharacterized protein (250 aa).

Residues 7–244 (LKVEDLHVYR…YKKECGKCYK (238 aa)) form the ABC transporter domain. 39-46 (GPNGAGKS) is a binding site for ATP.

This sequence belongs to the ABC transporter superfamily.

This is an uncharacterized protein from Methanocaldococcus jannaschii (strain ATCC 43067 / DSM 2661 / JAL-1 / JCM 10045 / NBRC 100440) (Methanococcus jannaschii).